The following is a 185-amino-acid chain: Elongation factor P (185 aa).

The protein belongs to the elongation factor P family.

It is found in the cytoplasm. It participates in protein biosynthesis; polypeptide chain elongation. Functionally, involved in peptide bond synthesis. Stimulates efficient translation and peptide-bond synthesis on native or reconstituted 70S ribosomes in vitro. Probably functions indirectly by altering the affinity of the ribosome for aminoacyl-tRNA, thus increasing their reactivity as acceptors for peptidyl transferase. This chain is Elongation factor P, found in Acaryochloris marina (strain MBIC 11017).